The sequence spans 226 residues: uncharacterized protein (226 aa).

This is an uncharacterized protein from Methanocaldococcus jannaschii (strain ATCC 43067 / DSM 2661 / JAL-1 / JCM 10045 / NBRC 100440) (Methanococcus jannaschii).